A 104-amino-acid polypeptide reads, in one-letter code: uncharacterized protein (104 aa).

This is an uncharacterized protein from Treponema pallidum (strain Nichols).